We begin with the raw amino-acid sequence, 532 residues long: Chondroitin sulfate N-acetylgalactosaminyltransferase 1 (532 aa).

Topologically, residues 1-14 are cytoplasmic; sequence MMMVRRGLLAWISR. A helical; Signal-anchor for type II membrane protein membrane pass occupies residues 15–35; sequence VVVLLVLLCCAISVLYMLACT. Residues 36 to 532 are Lumenal-facing; the sequence is PKGDEEQLAL…QKQKTSSKKT (497 aa). Positions 57–100 form a coiled coil; that stretch reads YQAVLQEWEEQHRNYVSSLKRQIAQLKEELQERSEQLRNGQYQA. N-linked (GlcNAc...) asparagine glycans are attached at residues N315 and N324. A divalent metal cation is bound by residues D360 and H477.

This sequence belongs to the chondroitin N-acetylgalactosaminyltransferase family. Post-translationally, N-glycosylated. In terms of tissue distribution, ubiquitous, with the highest levels in placenta, thyroid, bladder, prostate and adrenal gland. Detected at low levels in the other tissues examined.

The protein resides in the golgi apparatus. Its subcellular location is the golgi stack membrane. It carries out the reaction 3-O-(beta-D-GlcA-(1-&gt;3)-beta-D-Gal-(1-&gt;3)-beta-D-Gal-(1-&gt;4)-beta-D-Xyl)-L-seryl-[protein] + UDP-N-acetyl-alpha-D-galactosamine = 3-O-(beta-D-GalNAc-(1-&gt;4)-beta-D-GlcA-(1-&gt;3)-beta-D-Gal-(1-&gt;3)-beta-D-Gal-(1-&gt;4)-beta-D-Xyl)-L-seryl-[protein] + UDP + H(+). Transfers 1,4-N-acetylgalactosamine (GalNAc) from UDP-GalNAc to the non-reducing end of glucuronic acid (GlcUA). Required for addition of the first GalNAc to the core tetrasaccharide linker and for elongation of chondroitin chains. Important role in chondroitin chain biosynthesis in cartilage formation and subsequent endochondral ossification. Moreover, is involved in the metabolism of aggrecan. The polypeptide is Chondroitin sulfate N-acetylgalactosaminyltransferase 1 (Homo sapiens (Human)).